Reading from the N-terminus, the 321-residue chain is Nodulation protein D 1 (321 aa).

The HTH lysR-type domain occupies 6–63 (LDLNLLVALDALMTERKLTAAARSINLSQPAMSAAITRLRTYFRDELFTMNGRELVPT). Residues 23-42 (LTAAARSINLSQPAMSAAIT) constitute a DNA-binding region (H-T-H motif).

This sequence belongs to the LysR transcriptional regulatory family.

Its function is as follows. NodD regulates the expression of the nodABCFE genes which encode other nodulation proteins. NodD is also a negative regulator of its own expression. Binds flavonoids as inducers. In Bradyrhizobium japonicum, this protein is Nodulation protein D 1 (nodD1).